The sequence spans 871 residues: Espin (871 aa).

9 ANK repeats span residues 1–31 (MALEQALQAARRGDLDVLRSLHAAGLLGPSL), 35–66 (LDALPVHHAARSGKLHCLRYLVEEVALPAVSR), 69–99 (NGATPAHDAAATGYLSCLQWLLTQGGCRVQE), 103–132 (SGATVLHLAARFGHPDVVKWLLYQGGANSA), 137–167 (TGALPIHYAAAKGDLPSLKLLVGHYPEGVNA), 171–201 (NGATPLYLACQEGHLEVTKYLVQECSADPHL), 205–235 (DGMTPLHAAAQMGHNPVLVWLVSFADVSFSE), 239–268 (DGATAMHFAASRGHTKVLSWLLLHGAEISQ), and 271–300 (WGGTPLHDAAENGELECCQILAVNGAGLDV). 2 positions are modified to phosphoserine: Ser338 and Ser342. 4 disordered regions span residues 349-400 (QLDS…RGIP), 416-469 (PEKS…VGLH), 493-750 (KVEL…APGV), and 819-850 (EREQKRKEEERQKLEEIQRAKEQSEKLRTLGY). Residues 352–365 (SGMSSPNTTMSVQP) are compositionally biased toward polar residues. A compositionally biased stretch (low complexity) spans 377 to 395 (FSNYDSCSSSHSSSKGQRS). Positions 428-465 (PSPPPPPPPPPPSFPPPPPPTGTQPPPPPPGYPAPNPP) are enriched in pro residues. 3 positions are modified to phosphoserine: Ser517, Ser524, and Ser556. Residues 522 to 548 (QDSELLHRQELLRHSTGLRRQDSDRKQ) show a composition bias toward basic and acidic residues. The segment covering 606 to 629 (LPPPPPPPPLPEALSSPPPAPPLP) has biased composition (pro residues). 2 stretches are compositionally biased toward polar residues: residues 659 to 670 (KSFNMMSPTGDN) and 685 to 707 (PTPQSKGLTTVFSGSGQPASQPE). At Ser665 the chain carries Phosphoserine. Positions 669 to 686 (DNSELLAEIKAGKSLKPT) constitute a WH2 domain. Ser704, Ser708, and Ser714 each carry phosphoserine. Residues 772–848 (KRQVMVRKLQ…KEQSEKLRTL (77 aa)) are a coiled coil.

In terms of assembly, monomer. Binds F-actin in a Ca(2+)-resistant fashion. Interacts (via N-terminus) with BAIAP2 (via SH3-domain). Interacts with PFN2. Interacts with MYO3A (via C-terminus). Interacts with MYO3B (via C-terminus). Expressed at high concentration in the microvillar parallel actin bundle (PAB) of hair cells stereocilia in the cochlea and vestibular system. Detected also at high levels of a number of other sensory cell types, including taste receptor cells, solitary chemoreceptor cells, vomeronasal sensory neurons and Merkel cells. Isoforms 2, 3, 4 and 5 are expressed in Purkinje cells dendritic spines. Expressed in utricle hair bundles (at protein level).

The protein localises to the cytoplasm. It is found in the cytoskeleton. It localises to the cell projection. Its subcellular location is the stereocilium. The protein resides in the microvillus. The protein localises to the cell junction. It is found in the dendritic spine. Multifunctional actin-bundling protein. Plays a major role in regulating the organization, dimension, dynamics and signaling capacities of the actin filament-rich microvilli in the mechanosensory and chemosensory cells. Required for the assembly and stabilization of the stereociliary parallel actin bundles. Plays a crucial role in the formation and maintenance of inner ear hair cell stereocilia. Involved in the elongation of actin in stereocilia. In extrastriolar hair cells, required for targeting MYO3B to stereocilia tips, and for regulation of stereocilia diameter and staircase formation. The polypeptide is Espin (Espn) (Mus musculus (Mouse)).